Consider the following 101-residue polypeptide: Enhancer of yellow 2 transcription factor (101 aa).

This sequence belongs to the ENY2 family. Component of the nuclear pore complex (NPC)-associated AMEX complex (anchoring and mRNA export complex), composed of at least e(y)2 and xmas-2. Component of the SAGA transcription coactivator-HAT complexes, at least composed of Ada2b, e(y)2, Pcaf/Gcn5, Taf10 and Nipped-A/Trrap. Within the SAGA complex, e(y)2, Sgf11, and not/nonstop form an additional subcomplex of SAGA called the DUB module (deubiquitination module). Component of the THO complex, composed of at least e(y)2, HPR1, THO2, THOC5, THOC6 and THOC7. Interacts with e(y)1. Interacts with su(Hw) (via zinc fingers). Interacts with xmas-2; required for localization to the nuclear periphery. Interacts with the nuclear pore complex (NPC).

It localises to the nucleus. Its subcellular location is the nucleoplasm. The protein localises to the cytoplasm. In terms of biological role, involved in mRNA export coupled transcription activation by association with both the AMEX and the SAGA complexes. The SAGA complex is a multiprotein complex that activates transcription by remodeling chromatin and mediating histone acetylation and deubiquitination. Within the SAGA complex, participates in a subcomplex that specifically deubiquitinates histone H2B. The SAGA complex is recruited to specific gene promoters by activators, where it is required for transcription. Required for nuclear receptor-mediated transactivation. Involved in transcription elongation by recruiting the THO complex onto nascent mRNA. The AMEX complex functions in docking export-competent ribonucleoprotein particles (mRNPs) to the nuclear entrance of the nuclear pore complex (nuclear basket). AMEX participates in mRNA export and accurate chromatin positioning in the nucleus by tethering genes to the nuclear periphery. This is Enhancer of yellow 2 transcription factor from Drosophila sechellia (Fruit fly).